A 217-amino-acid polypeptide reads, in one-letter code: Ribosomal RNA small subunit methyltransferase G (217 aa).

S-adenosyl-L-methionine contacts are provided by residues Gly79, Phe84, 130-131, and Arg148; that span reads AE.

It belongs to the methyltransferase superfamily. RNA methyltransferase RsmG family.

The protein resides in the cytoplasm. It carries out the reaction guanosine(527) in 16S rRNA + S-adenosyl-L-methionine = N(7)-methylguanosine(527) in 16S rRNA + S-adenosyl-L-homocysteine. Functionally, specifically methylates the N7 position of guanine in position 527 of 16S rRNA. This is Ribosomal RNA small subunit methyltransferase G from Myxococcus xanthus (strain DK1622).